The following is a 466-amino-acid chain: 3-isopropylmalate dehydratase large subunit (466 aa).

Cys-347, Cys-407, and Cys-410 together coordinate [4Fe-4S] cluster.

This sequence belongs to the aconitase/IPM isomerase family. LeuC type 1 subfamily. As to quaternary structure, heterodimer of LeuC and LeuD. [4Fe-4S] cluster serves as cofactor.

The catalysed reaction is (2R,3S)-3-isopropylmalate = (2S)-2-isopropylmalate. It participates in amino-acid biosynthesis; L-leucine biosynthesis; L-leucine from 3-methyl-2-oxobutanoate: step 2/4. Its function is as follows. Catalyzes the isomerization between 2-isopropylmalate and 3-isopropylmalate, via the formation of 2-isopropylmaleate. The protein is 3-isopropylmalate dehydratase large subunit of Serratia proteamaculans (strain 568).